The primary structure comprises 124 residues: ATP synthase epsilon chain (124 aa).

The protein belongs to the ATPase epsilon chain family. As to quaternary structure, F-type ATPases have 2 components, CF(1) - the catalytic core - and CF(0) - the membrane proton channel. CF(1) has five subunits: alpha(3), beta(3), gamma(1), delta(1), epsilon(1). CF(0) has three main subunits: a, b and c.

The protein localises to the cell membrane. Functionally, produces ATP from ADP in the presence of a proton gradient across the membrane. The sequence is that of ATP synthase epsilon chain from Streptomyces avermitilis (strain ATCC 31267 / DSM 46492 / JCM 5070 / NBRC 14893 / NCIMB 12804 / NRRL 8165 / MA-4680).